We begin with the raw amino-acid sequence, 640 residues long: Threonine--tRNA ligase (640 aa).

Residues 1-61 (MPAITLPDGS…EHDAYVEIVT (61 aa)) enclose the TGS domain. The tract at residues 242–533 (DHRRLGRTQD…LIEHYGGALP (292 aa)) is catalytic. Zn(2+)-binding residues include C333, H384, and H510.

It belongs to the class-II aminoacyl-tRNA synthetase family. Homodimer. Zn(2+) serves as cofactor.

Its subcellular location is the cytoplasm. The enzyme catalyses tRNA(Thr) + L-threonine + ATP = L-threonyl-tRNA(Thr) + AMP + diphosphate + H(+). Its function is as follows. Catalyzes the attachment of threonine to tRNA(Thr) in a two-step reaction: L-threonine is first activated by ATP to form Thr-AMP and then transferred to the acceptor end of tRNA(Thr). Also edits incorrectly charged L-seryl-tRNA(Thr). The sequence is that of Threonine--tRNA ligase from Halorhodospira halophila (strain DSM 244 / SL1) (Ectothiorhodospira halophila (strain DSM 244 / SL1)).